A 285-amino-acid chain; its full sequence is Acetyl-coenzyme A carboxylase carboxyl transferase subunit beta (285 aa).

One can recognise a CoA carboxyltransferase N-terminal domain in the interval 22–285 (LWTKCEACGA…HPGVAYAPGV (264 aa)). Positions 26, 29, 45, and 48 each coordinate Zn(2+). Residues 26-48 (CEACGAQIYKKEFQENLHVCPKC) form a C4-type zinc finger.

This sequence belongs to the AccD/PCCB family. As to quaternary structure, acetyl-CoA carboxylase is a heterohexamer composed of biotin carboxyl carrier protein (AccB), biotin carboxylase (AccC) and two subunits each of ACCase subunit alpha (AccA) and ACCase subunit beta (AccD). The cofactor is Zn(2+).

The protein localises to the cytoplasm. It carries out the reaction N(6)-carboxybiotinyl-L-lysyl-[protein] + acetyl-CoA = N(6)-biotinyl-L-lysyl-[protein] + malonyl-CoA. The protein operates within lipid metabolism; malonyl-CoA biosynthesis; malonyl-CoA from acetyl-CoA: step 1/1. Component of the acetyl coenzyme A carboxylase (ACC) complex. Biotin carboxylase (BC) catalyzes the carboxylation of biotin on its carrier protein (BCCP) and then the CO(2) group is transferred by the transcarboxylase to acetyl-CoA to form malonyl-CoA. The chain is Acetyl-coenzyme A carboxylase carboxyl transferase subunit beta from Thermus thermophilus (strain ATCC 27634 / DSM 579 / HB8).